We begin with the raw amino-acid sequence, 95 residues long: MDKATLTFTDVSITVNVPTGTRIIEMSEKVGSGITYGCREGECGTCMTHILEGSENLSEPTALEMRVLEENLGGKDDRLACQCRVLGGAVKVRPA.

In terms of domain architecture, 2Fe-2S ferredoxin-type spans 2–95 (DKATLTFTDV…LGGAVKVRPA (94 aa)). C38, C43, C46, and C81 together coordinate [2Fe-2S] cluster.

The protein belongs to the 2Fe2S plant-type ferredoxin family. Requires [2Fe-2S] cluster as cofactor.

Functionally, ferredoxins are iron-sulfur proteins that transfer electrons in a wide variety of metabolic reactions. This ferredoxin is required for nitrogen fixation. The polypeptide is Ferredoxin-4 (fdxC) (Rhodobacter capsulatus (Rhodopseudomonas capsulata)).